Here is a 501-residue protein sequence, read N- to C-terminus: Putative antiporter subunit mnhD2 (501 aa).

The next 14 membrane-spanning stretches (helical) occupy residues 4 to 24, 33 to 53, 79 to 99, 109 to 129, 131 to 151, 162 to 182, 207 to 227, 245 to 265, 274 to 294, 309 to 329, 334 to 354, 369 to 389, 409 to 429, and 452 to 472; these read SNLL…LVFI, IFSI…LIYV, LSLL…AYGF, YYLP…FLTA, LFNI…LITL, IIYV…VGLL, IVIV…LVLF, FAAL…TLIF, PLLV…VLAY, IGFI…GAIF, DIVV…ITGL, FFGV…PFSG, LALM…IFFV, and NLIG…PLLF.

Belongs to the CPA3 antiporters (TC 2.A.63) subunit D family. May form a heterooligomeric complex that consists of seven subunits: mnhA2, mnhB2, mnhC2, mnhD2, mnhE2, mnhF2 and mnhG2.

The protein resides in the cell membrane. This Staphylococcus saprophyticus subsp. saprophyticus (strain ATCC 15305 / DSM 20229 / NCIMB 8711 / NCTC 7292 / S-41) protein is Putative antiporter subunit mnhD2 (mnhD2).